The chain runs to 107 residues: ATPase inhibitor, mitochondrial (107 aa).

The N-terminal 25 residues, 1 to 25 (MAGSALAVRARLGVWGMRVLQTRGF), are a transit peptide targeting the mitochondrion. The tract at residues 25-58 (FGSDSSESMDSGAGSIREAGGAFGKREKAEEDRY) is disordered. The N-terminal inhibitory region stretch occupies residues 26 to 52 (GSDSSESMDSGAGSIREAGGAFGKREK). Serine 39 carries the post-translational modification Phosphoserine. Basic and acidic residues predominate over residues 48 to 58 (GKREKAEEDRY). A coiled-coil region spans residues 60-107 (REKTREQLAALKKHHEDEIDHHSKEIERLQKQIERHKKKIKYLKNSEH). Positions 74 to 106 (HEDEIDHHSKEIERLQKQIERHKKKIKYLKNSE) are antiparallel alpha-helical coiled coil region. Lysine 103 bears the N6-succinyllysine mark.

The protein belongs to the ATPase inhibitor family. As to quaternary structure, homodimer; represents the active form and is present at a pH value below 6.5. Homotetramer; represents the inactive form and is present at a pH value above 7.0.

The protein localises to the mitochondrion. Its function is as follows. Endogenous F(1)F(o)-ATPase inhibitor limiting ATP depletion when the mitochondrial membrane potential falls below a threshold and the F(1)F(o)-ATP synthase starts hydrolyzing ATP to pump protons out of the mitochondrial matrix. Required to avoid the consumption of cellular ATP when the F(1)F(o)-ATP synthase enzyme acts as an ATP hydrolase. Indirectly acts as a regulator of heme synthesis in erythroid tissues: regulates heme synthesis by modulating the mitochondrial pH and redox potential, allowing FECH to efficiently catalyze the incorporation of iron into protoporphyrin IX to produce heme. In Rattus norvegicus (Rat), this protein is ATPase inhibitor, mitochondrial.